We begin with the raw amino-acid sequence, 427 residues long: Peptidase B (427 aa).

Mn(2+) is bound by residues K195 and D200. K207 is a catalytic residue. Mn(2+) contacts are provided by D218, D277, and E279. R281 is an active-site residue.

Belongs to the peptidase M17 family. In terms of assembly, homohexamer. Mn(2+) serves as cofactor.

The protein resides in the cytoplasm. It carries out the reaction Release of an N-terminal amino acid, Xaa, from a peptide or arylamide. Xaa is preferably Glu or Asp but may be other amino acids, including Leu, Met, His, Cys and Gln.. Functionally, probably plays an important role in intracellular peptide degradation. This chain is Peptidase B, found in Escherichia coli (strain UTI89 / UPEC).